Consider the following 318-residue polypeptide: Lymphatic vessel endothelial hyaluronic acid receptor 1 (318 aa).

The first 23 residues, 1-23 (MLQHTSLVLLLASIWTTRHPVQG), serve as a signal peptide directing secretion. Over 24 to 234 (ADLVQDLSIS…EAAGFGGVPT (211 aa)) the chain is Extracellular. One can recognise a Link domain in the interval 39 to 129 (GVALVGRNKN…SQKFKAYCHN (91 aa)). Residue Asn-52 is glycosylated (N-linked (GlcNAc...) asparagine). 2 cysteine pairs are disulfide-bonded: Cys-60/Cys-127 and Cys-84/Cys-105. Asn-129 carries an N-linked (GlcNAc...) asparagine glycan. A helical transmembrane segment spans residues 235–255 (ALLVLALLFFGAAAVLAVCYV). Over 256–318 (KRYVKAFPFT…TTVRCLEAEV (63 aa)) the chain is Cytoplasmic. The span at 284 to 305 (ADDVNANEESKKTIKNPEEAKS) shows a compositional bias: basic and acidic residues. Residues 284–318 (ADDVNANEESKKTIKNPEEAKSPPKTTVRCLEAEV) are disordered.

As to quaternary structure, homodimer; disulfide-linked. Interacts with PDGFB and IGFBP3. Forms a transient ternary complex with PDGFB and PDGFRB in TGN. Post-translationally, O-glycosylated.

It is found in the membrane. Its function is as follows. Ligand-specific transporter trafficking between intracellular organelles (TGN) and the plasma membrane. Plays a role in autocrine regulation of cell growth mediated by growth regulators containing cell surface retention sequence binding (CRS). May act as a hyaluronan (HA) transporter, either mediating its uptake for catabolism within lymphatic endothelial cells themselves, or its transport into the lumen of afferent lymphatic vessels for subsequent re-uptake and degradation in lymph nodes. Binds to pericelluar hyaluronan matrices deposited on the surface of leukocytes and facilitates cell adhesion and migration through lymphatic endothelium. This chain is Lymphatic vessel endothelial hyaluronic acid receptor 1 (Lyve1), found in Mus musculus (Mouse).